Here is a 499-residue protein sequence, read N- to C-terminus: CD-NTase-associated protein 4 (499 aa).

The interval 1–226 is N-terminal endonuclease domain; sequence MATSVLANWH…DFRFDGAARA (226 aa). Residues Asp-49 and Gln-72 contribute to the active site. Asp-49 serves as a coordination point for Mg(2+). Ile-73 lines the Mg(2+) pocket. Lys-74 is a catalytic residue. The tract at residues 258 to 464 is C-terminal SAVED domain; it reads FRNVALRSFS…HIFSAAPNAV (207 aa).

This sequence belongs to the Cap4 nuclease family. In terms of assembly, a monomer in the absence of ligand, in its presence it forms oligomers. Requires Mg(2+) as cofactor.

Its activity is regulated as follows. DNase activity is activated upon ligand binding (cAAG). Inhibited by EDTA. In terms of biological role, effector DNase of a CBASS antivirus system. CBASS (cyclic oligonucleotide-based antiphage signaling system) provides immunity against bacteriophages. The CD-NTase protein (CdnD) synthesizes cyclic nucleotides in response to infection; these serve as specific second messenger signals. The signals activate a diverse range of effectors, leading to bacterial cell death and thus abortive phage infection. A type II-C(AAG) CBASS system. Functionally, binds second messenger 3',3',3'-cyclic AMP-AMP-GMP (cAAG). In the presence of cAAG (synthesized by the cognate CD-NTase protein in the CBASS operon), endonucleolytically degrades dsDNA to approximately 17 bp length fragments, with a preference for 5'-C|NG sites. Only binds DNA in the presence of cAAG. Not activated by c-di-AMP, c-di-GMP, 3',3'-cyclic GMP-AMP (cGAMP) or the second messenger of A.baumanii strain ATCC 27244. Its function is as follows. Protects E.coli against phage T2 infection. When the cdnD-cap2-cap3-cap4 operon is introduced in E.coli there is a more than 10(3) decrease in the efficiency of T2 plaque formation. The operon does not protect against phage T5 and only about 10-fold against T7. Expression of cdnD-cap4 alone protects E.coli against phage T2 infection. The polypeptide is CD-NTase-associated protein 4 (Enterobacter hormaechei subsp. hoffmannii (strain UCI 50)).